A 333-amino-acid polypeptide reads, in one-letter code: MFKFVFKRILMVIPTFIAITLITFALVHFIPGDPVEIMMGERGLTAEVHQQMMHQLGLDLPLYQQYFHYIGNVIQGDFGASFRTQQPVLTEFFTLFPATAELAFFALFWSLLGGIILGTIAAVKKDSWISHTVTAASLTGYSMPIFWWGLILILYVSPQLGLPQGGRLDNEFWIDTPTGFMLIDSWLSGVSGAFENAVKSLILPAIVLGTVPLAIITRMTRSAMLEVLGEDYIRTAKAKGLSYTRIVIVHALRNALIPVVTVVGLIVAQLLSGAVLTETIFSWPGIGKWIIDAIQARDYPVLQGSVLIIATIIIVVNLTVDLLYGVVNPRIRH.

6 helical membrane passes run 9–29 (ILMV…LVHF), 103–123 (AFFA…IAAV), 136–156 (ASLT…ILYV), 197–217 (AVKS…AIIT), 256–276 (LIPV…GAVL), and 306–326 (VLII…LYGV). An ABC transmembrane type-1 domain is found at 96–328 (FPATAELAFF…TVDLLYGVVN (233 aa)).

This sequence belongs to the binding-protein-dependent transport system permease family. OppBC subfamily.

The protein resides in the cell inner membrane. In terms of biological role, part of the ABC transporter DppBCDF involved in dipeptide transport. Responsible for the translocation of the substrate across the membrane. The chain is Dipeptide transport system permease protein DppB (dppB) from Haemophilus influenzae (strain ATCC 51907 / DSM 11121 / KW20 / Rd).